The primary structure comprises 3946 residues: Hybrid PKS-NRPS synthetase lepA (3946 aa).

The Ketosynthase family 3 (KS3) domain maps to 9-440; it reads VEPIAIVGSA…GTNAHVILEG (432 aa). Residues Cys183, His320, and His363 each act as for beta-ketoacyl synthase activity in the active site. Residues 553–871 form a malonyl-CoA:ACP transacylase (MAT) domain region; the sequence is IFTGQGAQWA…PYAGIMRRAT (319 aa). Residues 945–1073 are N-terminal hotdog fold; the sequence is HELLGRRAPD…GRLILFKGEG (129 aa). A dehydratase (DH) domain region spans residues 945 to 1238; the sequence is HELLGRRAPD…RLQSFTEAKA (294 aa). Residues 945-1239 form the PKS/mFAS DH domain; that stretch reads HELLGRRAPD…LQSFTEAKAL (295 aa). Residue His977 is the Proton acceptor; for dehydratase activity of the active site. Residues 1088 to 1239 form a C-terminal hotdog fold region; it reads LSPLDREMFY…LQSFTEAKAL (152 aa). Catalysis depends on Asp1147, which acts as the Proton donor; for dehydratase activity. A methyltransferase (MT) domain region spans residues 1380–1580; it reads LLNRFYTDGR…ATVSDLPSDG (201 aa). The segment at 2093–2266 is ketoreductase (KR) domain; that stretch reads TYWMIGLNSE…AASVIDIGLV (174 aa). Positions 2352–2365 are enriched in low complexity; that stretch reads SSQDSDQSNSTSAS. Residues 2352–2372 form a disordered region; sequence SSQDSDQSNSTSASIRDQVSS. Residues 2378-2455 enclose the Carrier 1 domain; sequence EGTDVLLRCF…EICAEAIQKF (78 aa). Ser2415 carries the post-translational modification O-(pantetheine 4'-phosphoryl)serine. The interval 2474-2531 is disordered; the sequence is KQATASPPEIGREEAQSTSRAGILPTDQDNDNSSDSESQRKSGASSSSGSGTRTPTSI. Over residues 2508 to 2530 the composition is skewed to low complexity; it reads DSESQRKSGASSSSGSGTRTPTS. Positions 2547 to 2976 are condensation (C) domain; it reads PMSYAQSRLW…MQIQDGLLND (430 aa). The segment at 3000 to 3402 is adenylation (A) (KR) domain; the sequence is FSQRAATDAN…GGLIFMGRLD (403 aa). Positions 3492 to 3511 are disordered; it reads GKVDRKALQDKPLPTEPDSS. One can recognise a Carrier 2 domain in the interval 3515–3594; that stretch reads EALSLAEGEL…RMATLIDAEK (80 aa). Position 3554 is an O-(pantetheine 4'-phosphoryl)serine (Ser3554). Residues 3633 to 3833 are reductase (RED) domain; the sequence is LTGSTGFLGM…RFSVLMKVVP (201 aa).

It in the C-terminal section; belongs to the NRP synthetase family.

Hybrid PKS-NRPS synthetase; part of the gene cluster 23 that mediates the biosynthesis of a family of 2-pyridones known as leporins. The hybrid PKS-NRPS synthetase lepA and the enoyl reductase lepG are responsible for fusion of phenylalanine with a hexaketide and subsequent release of the stable tetramic acid precursor, pre-leporin C. Because lepA lacks a designated enoylreductase (ER) domain, the required activity is provided the enoyl reductase lepG. It is possible that the dehydrogenase lepF also participates in production of pre-leporin C. Cytochrome P450 monooxygenase lepH is then required for the ring expansion step to yield leporin C. Leporin C is then presumably further oxidized by the N-hydroxylase lepD to form leporin B. LepI may possess a function in biosynthesis upstream of lepA. Leporin B is further oxidized in the presence of ferric ion to give the leporin B trimer-iron chelate, but whether or not this reaction is catalyzed by an enzyme in the pathway or by ferric ion is not determined yet. The polypeptide is Hybrid PKS-NRPS synthetase lepA (Aspergillus flavus (strain ATCC 200026 / FGSC A1120 / IAM 13836 / NRRL 3357 / JCM 12722 / SRRC 167)).